Consider the following 1528-residue polypeptide: DNA topoisomerase 2-alpha (1528 aa).

Residue methionine 1 is modified to N-acetylmethionine. Phosphoserine is present on serine 4. Lysine 17 participates in a covalent cross-link: Glycyl lysine isopeptide (Lys-Gly) (interchain with G-Cter in SUMO2). Residues asparagine 90, asparagine 119, and 147–149 contribute to the ATP site; that span reads SSN. Glycyl lysine isopeptide (Lys-Gly) (interchain with G-Cter in SUMO2) cross-links involve residues lysine 155 and lysine 156. An ATP-binding site is contributed by 160-167; the sequence is GRNGYGAK. A Phosphothreonine modification is found at threonine 281. Residues 341–343 are interaction with DNA; that stretch reads KKK. Lysine 351 participates in a covalent cross-link: Glycyl lysine isopeptide (Lys-Gly) (interchain with G-Cter in SUMO2). 375 to 377 contributes to the ATP binding site; it reads QTK. Glycyl lysine isopeptide (Lys-Gly) (interchain with G-Cter in SUMO2) cross-links involve residues lysine 385, lysine 396, lysine 415, lysine 417, lysine 424, and lysine 439. The Toprim domain occupies 454 to 571; sequence CTLILTEGDS…SLLRHRFLEE (118 aa). Glutamate 460 is a binding site for Mg(2+). Glycyl lysine isopeptide (Lys-Gly) (interchain with G-Cter in SUMO2) cross-links involve residues lysine 465, lysine 479, and lysine 528. Residues aspartate 540 and aspartate 542 each contribute to the Mg(2+) site. Residues lysine 583, lysine 598, lysine 613, lysine 621, lysine 624, lysine 631, lysine 638, lysine 654, lysine 661, and lysine 675 each participate in a glycyl lysine isopeptide (Lys-Gly) (interchain with G-Cter in SUMO2) cross-link. A Topo IIA-type catalytic domain is found at 714-1168; the sequence is IPSMVDGLKP…SPSDLWKEDL (455 aa). The O-(5'-phospho-DNA)-tyrosine intermediate role is filled by tyrosine 804. The interval 989–998 is interaction with DNA; that stretch reads KLQSSLTCNS. Residue lysine 1074 forms a Glycyl lysine isopeptide (Lys-Gly) (interchain with G-Cter in SUMO2) linkage. Disordered regions lie at residues 1090–1118 and 1183–1211; these read KEAQ…AAEA and KQDE…VLPS. A compositionally biased stretch (acidic residues) spans 1098 to 1107; the sequence is DEEENEESDT. Serine 1105 carries the post-translational modification Phosphoserine; by CK1. The span at 1108–1118 shows a compositional bias: low complexity; sequence ETSTSDSAAEA. Glycyl lysine isopeptide (Lys-Gly) (interchain with G-Cter in SUMO2) cross-links involve residues lysine 1193 and lysine 1201. Position 1211 is a phosphoserine (serine 1211). Lysine 1226 participates in a covalent cross-link: Glycyl lysine isopeptide (Lys-Gly) (interchain with G-Cter in SUMO2). The segment at 1229-1528 is disordered; that stretch reads AEKKIRKKIK…EESDDDDDLF (300 aa). Lysine 1238 is covalently cross-linked (Glycyl lysine isopeptide (Lys-Gly) (interchain with G-Cter in SUMO1); alternate). Lysine 1238 is covalently cross-linked (Glycyl lysine isopeptide (Lys-Gly) (interchain with G-Cter in SUMO2); alternate). Position 1245 is a phosphothreonine (threonine 1245). A compositionally biased stretch (basic and acidic residues) spans 1258 to 1270; sequence QRIEKKQKKEPGA. Glycyl lysine isopeptide (Lys-Gly) (interchain with G-Cter in SUMO2) cross-links involve residues lysine 1272, lysine 1279, and lysine 1282. A phosphoserine mark is found at serine 1291, serine 1293, serine 1295, and serine 1298. A compositionally biased stretch (low complexity) spans 1296–1306; the sequence is DVSSNESNVDV. Threonine 1323 is subject to Phosphothreonine. Over residues 1326 to 1345 the composition is skewed to acidic residues; the sequence is LDSDEDFSGLDEKDEDEDFL. A phosphoserine mark is found at serine 1328 and serine 1333. Phosphothreonine is present on threonine 1350. Glycyl lysine isopeptide (Lys-Gly) (interchain with G-Cter in SUMO2) cross-links involve residues lysine 1359 and lysine 1363. Phosphoserine is present on residues serine 1370 and serine 1373. Lysine 1382 is covalently cross-linked (Glycyl lysine isopeptide (Lys-Gly) (interchain with G-Cter in SUMO2)). Phosphoserine occurs at positions 1384 and 1388. Residue lysine 1418 forms a Glycyl lysine isopeptide (Lys-Gly) (interchain with G-Cter in SUMO2); alternate linkage. The residue at position 1418 (lysine 1418) is an N6-acetyllysine; alternate. Positions 1429–1435 are interaction with PLSCR1; sequence KKRAAPK. Lysine 1438 participates in a covalent cross-link: Glycyl lysine isopeptide (Lys-Gly) (interchain with G-Cter in SUMO2); alternate. Lysine 1438 carries the post-translational modification N6-acetyllysine; alternate. Residues lysine 1450 and lysine 1455 each participate in a glycyl lysine isopeptide (Lys-Gly) (interchain with G-Cter in SUMO2) cross-link. A phosphoserine mark is found at serine 1465, serine 1467, serine 1470, and serine 1472. Glycyl lysine isopeptide (Lys-Gly) (interchain with G-Cter in SUMO2) cross-links involve residues lysine 1480 and lysine 1488. A compositionally biased stretch (basic and acidic residues) spans 1506-1519; it reads AKSDRARKPIKYLE. At serine 1521 the chain carries Phosphoserine.

This sequence belongs to the type II topoisomerase family. Homodimer. Interacts with COPS5. Interacts with RECQL5; this stimulates DNA decatenation. Interacts with SETMAR; stimulates the topoisomerase activity. Interacts with DHX9; this interaction occurs in a E2 enzyme UBE2I- and RNA-dependent manner, negatively regulates DHX9-mediated double-stranded DNA and RNA duplex helicase activity and stimulates TOP2A-mediated supercoiled DNA relaxation activity. Interacts with HNRNPU (via C-terminus); this interaction protects the topoisomerase TOP2A from degradation and positively regulates the relaxation of supercoiled DNA in a RNA-dependent manner. Interacts with MCM3AP. Interacts with ERCC6. Interacts with PLSCR1. Interacts with GCNA; this interaction allows the resolution of topoisomerase II (TOP2A) DNA-protein cross-links. Interacts with POL1RA/RPA1 (via dock II) and UBTF in the context of Pol I complex; may assist Pol I transcription initiation by releasing supercoils occurring during DNA unwinding. Interacts with TPRN; TPRN interacts with a number of DNA damage response proteins, is recruited to sites of DNA damage and may play a role in DNA damage repair. Mg(2+) serves as cofactor. Requires Mn(2+) as cofactor. The cofactor is Ca(2+). Phosphorylation has no effect on catalytic activity. However, phosphorylation at Ser-1105 by CSNK1D/CK1 promotes DNA cleavable complex formation.

Its subcellular location is the cytoplasm. The protein resides in the nucleus. The protein localises to the nucleoplasm. It localises to the nucleolus. The catalysed reaction is ATP-dependent breakage, passage and rejoining of double-stranded DNA.. Key decatenating enzyme that alters DNA topology by binding to two double-stranded DNA molecules, generating a double-stranded break in one of the strands, passing the intact strand through the broken strand, and religating the broken strand. May play a role in regulating the period length of BMAL1 transcriptional oscillation. The sequence is that of DNA topoisomerase 2-alpha (Top2a) from Mus musculus (Mouse).